Consider the following 5054-residue polypeptide: Malformin synthetase mlfA (5054 aa).

The segment at 194–585 (ERRAANRPHS…CGRADTQVKL (392 aa)) is adenylation 1. Residues 723–799 (LGLSQLEQEI…EASSLAEVQE (77 aa)) enclose the Carrier 1 domain. Residue Ser-760 is modified to O-(pantetheine 4'-phosphoryl)serine. Positions 837-1268 (EDVFPCTTMQ…ALNTLTLLQA (432 aa)) are condensation 1. Residues 1296–1685 (DRWVTRQPES…GRKDTQVKLR (390 aa)) form an adenylation 2 region. The Carrier 2 domain occupies 1823–1900 (TASSKLELTL…QLAAILGEAT (78 aa)). O-(pantetheine 4'-phosphoryl)serine is present on Ser-1860. Disordered regions lie at residues 1899 to 1929 (ATGQPESSASSTTEEGFTFSTPDDSSTNDGV) and 1964 to 1994 (GSSSCKTPSVSSSSSSSSSRKKKSAKVVSPV). 2 stretches are compositionally biased toward low complexity: residues 1904–1927 (ESSASSTTEEGFTFSTPDDSSTND) and 1965–1981 (SSSCKTPSVSSSSSSSS). Residues 2033–2448 (EDIYPATALQ…GVSYRDKQTL (416 aa)) form a condensation 2 region. Residues 2471–2863 (VRTPHAPAVF…IGRRDGQLKL (393 aa)) are adenylation 3. A Carrier 3 domain is found at 2999 to 3075 (RPATAQEREM…QLMRHLSANG (77 aa)). Ser-3036 is subject to O-(pantetheine 4'-phosphoryl)serine. Condensation stretches follow at residues 3092–3557 (WVPL…TYDQ) and 3578–3997 (DIYP…EQLV). Residues 4022 to 4412 (HSSREAACAW…VGRKDNQIKF (391 aa)) form an adenylation 4 region. Residues 4546-4622 (MPFTAAECKM…DLAYRTANLV (77 aa)) form the Carrier 4 domain. Residue Ser-4583 is modified to O-(pantetheine 4'-phosphoryl)serine. Positions 4659 to 4972 (EVLPTTSFQR…LQTIVQHQNN (314 aa)) are condensation 5.

This sequence belongs to the NRP synthetase family.

Its pathway is secondary metabolite biosynthesis. Its function is as follows. Nonribosomal peptide synthetase; part of the gene cluster that mediates the biosynthesis of malformins, cyclic pentapeptides with a disulfide bond between 2 consecutive cysteins, that show potential anti-tumor as well as antimalarial and antitrypanosomal properties. The nonribosomal peptide synthetase mlfA is responsible of the formation of the cyclic pentapeptide. The malformin biosynthesis clusters in malformin-producing fungi also contain enzymes involved in the formation of the disulfide bond between the two consecutive cysteins within malformins, in addition to additional tailoring enzymes such as methyltransferases or oxidoreductases. They are also composed of up to 4 major facilitator superfamily transporters, and transcription factors probably involved in the regulation of the expression of those clusters. The polypeptide is Malformin synthetase mlfA (Aspergillus niger (strain ATCC MYA-4892 / CBS 513.88 / FGSC A1513)).